Reading from the N-terminus, the 544-residue chain is Membrane protein insertase YidC (544 aa).

The helical transmembrane segment at N6–D26 threads the bilayer. The disordered stretch occupies residues A34–D58. Positions S39–S49 are enriched in polar residues. The next 4 membrane-spanning stretches (helical) occupy residues L345 to L365, G423 to L443, L460 to M480, and V503 to G523.

The protein belongs to the OXA1/ALB3/YidC family. Type 1 subfamily. As to quaternary structure, interacts with the Sec translocase complex via SecD. Specifically interacts with transmembrane segments of nascent integral membrane proteins during membrane integration.

It localises to the cell inner membrane. Functionally, required for the insertion and/or proper folding and/or complex formation of integral membrane proteins into the membrane. Involved in integration of membrane proteins that insert both dependently and independently of the Sec translocase complex, as well as at least some lipoproteins. Aids folding of multispanning membrane proteins. In Shewanella halifaxensis (strain HAW-EB4), this protein is Membrane protein insertase YidC.